A 165-amino-acid polypeptide reads, in one-letter code: SPbeta prophage-derived uncharacterized protein YorR (165 aa).

The polypeptide is SPbeta prophage-derived uncharacterized protein YorR (yorR) (Bacillus subtilis (strain 168)).